A 442-amino-acid polypeptide reads, in one-letter code: DNA N(6)-methyladenine demethylase ALKBH1D (442 aa).

Positions 135–144 (SMVHFDSTNP) are enriched in polar residues. Residues 135–185 (SMVHFDSTNPSSSSKSSQSQNLKIRKVRNHRNSGFKSRDQSPQRIKDPPPF) are disordered. The segment covering 145 to 154 (SSSSKSSQSQ) has biased composition (low complexity). Positions 157–167 (KIRKVRNHRNS) are enriched in basic residues. Basic and acidic residues predominate over residues 170–183 (KSRDQSPQRIKDPP). Residues 332–442 (SPDICIVNFY…GRLNLTFRHF (111 aa)) form the Fe2OG dioxygenase domain. 339–341 (NFY) provides a ligand contact to 2-oxoglutarate. Histidine 350, aspartate 352, and histidine 410 together coordinate Fe cation. Position 434 to 440 (434 to 440 (RLNLTFR)) interacts with 2-oxoglutarate.

Belongs to the alkB family. The cofactor is Fe(2+). As to expression, expressed at low levels in roots, seedlings and rosette leaves, but barely in cauline leaves, stems, siliques and flowers.

The protein localises to the nucleus. The protein resides in the cytoplasm. It carries out the reaction an N(6)-methyl-2'-deoxyadenosine in DNA + 2-oxoglutarate + O2 = a 2'-deoxyadenosine in DNA + formaldehyde + succinate + CO2. In terms of biological role, dioxygenase that catalyzes DNA N(6)-methyladenine (6 mA) demethylation to modulate gene expression and regulate seed germination. This chain is DNA N(6)-methyladenine demethylase ALKBH1D, found in Arabidopsis thaliana (Mouse-ear cress).